Consider the following 402-residue polypeptide: MIIHPKVRGFICTTTHPLGCERNVLEQIAATRARGVRNDGPKKVLVIGASSGYGLASRITAAFGFGADTLGVFFEKPGTASKAGTAGWYNSAAFDKHAKAAGLYSKSINGDAFSDAARAQVIELIKTEMGGQVDLVVYSLASPVRKLPGSGEVKRSALKPIGQTYTATAIDTNKDTIIQASIEPASAQEIEETITVMGGQDWELWIDALEGAGVLADGARSVAFSYIGTEITWPIYWHGALGKAKVDLDRTAQRLNARLAKHGGGANVAVLKSVVTQASAAIPVMPLYISMVYKIMKEKGLHEGTIEQLDRLFRERLYRQDGQPAEVDEQNRLRLDDWELRDDVQDACKALWPQVTTENLFELTDYAGYKHEFLKLFGFGRTDVDYDADVATDVAFDCIELA.

NAD(+) contacts are provided by residues 48–53 (GASSGY), 74–75 (FE), 111–112 (DA), and 140–141 (LA). A substrate-binding site is contributed by tyrosine 226. The active-site Proton donor is the tyrosine 236. Residues lysine 245 and 274–276 (VVT) contribute to the NAD(+) site.

This sequence belongs to the TER reductase family. In terms of assembly, monomer.

It catalyses the reaction a 2,3-saturated acyl-[ACP] + NAD(+) = a (2E)-enoyl-[ACP] + NADH + H(+). It carries out the reaction a 2,3-saturated acyl-CoA + NAD(+) = a (2E)-enoyl-CoA + NADH + H(+). Its pathway is lipid metabolism; fatty acid biosynthesis. Its function is as follows. Involved in the final reduction of the elongation cycle of fatty acid synthesis (FAS II). Catalyzes the reduction of a carbon-carbon double bond in an enoyl moiety that is covalently linked to an acyl carrier protein (ACP). It can also use crotonyl-CoA. This is Enoyl-[acyl-carrier-protein] reductase [NADH] from Xanthomonas oryzae pv. oryzae (strain MAFF 311018).